We begin with the raw amino-acid sequence, 179 residues long: MAELATIARPYAEALFRVAEGGDISAWSTLVQELAQVAQLPEVLSVASSPKVSRTQVAELLLAALKSPLASGAQAKNFVQMLVDNHRIALLPEIAEQFEALKNAREGAADVQIVSAFPLEGAQLAELVTSLERKFKRKLKPAVEVDSSLIGGVRVTVGDEVLDTSVRARLAGMQAALTA.

It belongs to the ATPase delta chain family. As to quaternary structure, F-type ATPases have 2 components, F(1) - the catalytic core - and F(0) - the membrane proton channel. F(1) has five subunits: alpha(3), beta(3), gamma(1), delta(1), epsilon(1). F(0) has three main subunits: a(1), b(2) and c(10-14). The alpha and beta chains form an alternating ring which encloses part of the gamma chain. F(1) is attached to F(0) by a central stalk formed by the gamma and epsilon chains, while a peripheral stalk is formed by the delta and b chains.

It localises to the cell inner membrane. F(1)F(0) ATP synthase produces ATP from ADP in the presence of a proton or sodium gradient. F-type ATPases consist of two structural domains, F(1) containing the extramembraneous catalytic core and F(0) containing the membrane proton channel, linked together by a central stalk and a peripheral stalk. During catalysis, ATP synthesis in the catalytic domain of F(1) is coupled via a rotary mechanism of the central stalk subunits to proton translocation. Functionally, this protein is part of the stalk that links CF(0) to CF(1). It either transmits conformational changes from CF(0) to CF(1) or is implicated in proton conduction. In Burkholderia pseudomallei (strain 1710b), this protein is ATP synthase subunit delta.